Consider the following 341-residue polypeptide: tRNA N6-adenosine threonylcarbamoyltransferase (341 aa).

His-115 and His-119 together coordinate Fe cation. Substrate-binding positions include 137–141 (IVSGG), Asp-170, Gly-183, Asp-187, and Asn-276. Fe cation is bound at residue Asp-304.

The protein belongs to the KAE1 / TsaD family. Fe(2+) serves as cofactor.

It is found in the cytoplasm. It carries out the reaction L-threonylcarbamoyladenylate + adenosine(37) in tRNA = N(6)-L-threonylcarbamoyladenosine(37) in tRNA + AMP + H(+). Its function is as follows. Required for the formation of a threonylcarbamoyl group on adenosine at position 37 (t(6)A37) in tRNAs that read codons beginning with adenine. Is involved in the transfer of the threonylcarbamoyl moiety of threonylcarbamoyl-AMP (TC-AMP) to the N6 group of A37, together with TsaE and TsaB. TsaD likely plays a direct catalytic role in this reaction. The sequence is that of tRNA N6-adenosine threonylcarbamoyltransferase from Staphylococcus aureus (strain MSSA476).